Reading from the N-terminus, the 174-residue chain is Regenerating islet-derived protein 3-gamma (174 aa).

An N-terminal signal peptide occupies residues Met-1–Gly-26. A propeptide spanning residues Glu-27–Arg-37 is cleaved from the precursor. Cystine bridges form between Cys-40/Cys-51, Cys-68/Cys-170, and Cys-145/Cys-162. Positions Tyr-47–Lys-171 constitute a C-type lectin domain. Positions Trp-103–Gly-118 are sufficient to activate EXTL3. His-107 serves as a coordination point for Zn(2+). The EPN motif lies at Glu-114–Asn-116. 2 residues coordinate Zn(2+): Glu-121 and His-144.

In terms of assembly, forms a hexameric membrane-permeabilizing oligomeric pore on membrane phospholipids. The hexamer is formed by three dimers related by helical symmetry. Forms filaments, filamentation traps pore complexes and limits damage to host cells. Interacts with EXTL3. Post-translationally, proteolytic processing by trypsin removes an inhibitory N-terminal propeptide and is essential for peptidoglycan binding and antibacterial activity. In terms of tissue distribution, expressed in injured skeletal muscles and sciatic nerve (at protein level). Expressed in the pancreas. Expression increases during the acute phase of pancreatitis.

Its subcellular location is the secreted. It is found in the cytoplasm. Its activity is regulated as follows. Lipopolysaccharide inhibits pore-forming activity, explaining why is bactericidal for Gram-positive but not Gram-negative bacteria. Functionally, bactericidal C-type lectin which acts exclusively against Gram-positive bacteria and mediates bacterial killing by binding to surface-exposed carbohydrate moieties of peptidoglycan. Restricts bacterial colonization of the intestinal epithelial surface and consequently limits activation of adaptive immune responses by the microbiota. In terms of biological role, acts as a hormone in response to different stimuli like anti-inflammatory signals, such as IL17A, or gut microbiome. Is secreted by different cell types to activate its receptor EXTL3 and induce cell specific signaling pathways. Induced by IL17A in keratinocytes, regulates keratinocyte proliferation and differentiation after skin injury. In parallel, inhibits skin inflammation through the inhibition of inflammatory cytokines such as IL6 and TNF. Induced by IL22 in lung epithelial cells, inhibits cytokine production and regulates allergic airway inflammation. Induced in small intestine by inulin-enriched diet and Lactobacillus gasseri enriched microbiome, plays a role in the improvement of gut barrier function, the regulation of energy balance and glucose levels. Modulates microbiota composition in duodenal contents. Produced by nociceptor in response to endotoxins, prevents endotoxic death by targeting kynurenine pathway in microglia. Its function is as follows. Has bacteriostatic activity. Has bactericidal activity against L.monocytogenes and methicillin-resistant S.aureus. The protein is Regenerating islet-derived protein 3-gamma of Rattus norvegicus (Rat).